We begin with the raw amino-acid sequence, 236 residues long: Phospholipid hydroperoxide glutathione peroxidase 1, chloroplastic (236 aa).

The segment covering 1–16 (MVSMTTSSSSYGTFST) has biased composition (low complexity). Residues 1–24 (MVSMTTSSSSYGTFSTVVNSSRPN) are disordered. The transit peptide at 1–64 (MVSMTTSSSS…PINPGFLFKS (64 aa)) directs the protein to the chloroplast. The active site involves Cys-111.

It belongs to the glutathione peroxidase family. In terms of tissue distribution, expressed in leaves, stems, flowers, green siliques and seeds.

The protein localises to the plastid. It localises to the chloroplast. The catalysed reaction is a hydroperoxy polyunsaturated fatty acid + 2 glutathione = a hydroxy polyunsaturated fatty acid + glutathione disulfide + H2O. Its function is as follows. Protects cells and enzymes from oxidative damage, by catalyzing the reduction of hydrogen peroxide, lipid peroxides and organic hydroperoxide, by glutathione. This is Phospholipid hydroperoxide glutathione peroxidase 1, chloroplastic (GPX1) from Arabidopsis thaliana (Mouse-ear cress).